Consider the following 516-residue polypeptide: Probable cyclic di-GMP phosphodiesterase PdeB (516 aa).

The next 2 membrane-spanning stretches (helical) occupy residues 6–26 (LVGL…GLSI) and 242–262 (QVFI…MFVL). The 249-residue stretch at 268–516 (IQSPHHRLQD…DFLRWAEQHL (249 aa)) folds into the EAL domain.

It is found in the cell inner membrane. It catalyses the reaction 3',3'-c-di-GMP + H2O = 5'-phosphoguanylyl(3'-&gt;5')guanosine + H(+). Phosphodiesterase (PDE) that catalyzes the hydrolysis of cyclic-di-GMP (c-di-GMP) to 5'-pGpG. This is Probable cyclic di-GMP phosphodiesterase PdeB from Escherichia coli (strain K12).